A 357-amino-acid chain; its full sequence is MDHFDQDTYHNLPVEIWKHIIDSDIDSTINLLFSCKQFIGLVCILTNNLNLLNLLVKKGNLKFLEFYFRLNTETNKLYTEQRLRVEQNECLKMSCIHGCLEILKYLISIGVDFRMNDDEPLMLAIENGHLKIVQFLYSKRVNIRARNNRPLVLSCEKGYINIVNFLLDKKASFVSKQNEVFSTACGFGQMDIVKLLVEKGADINVGKIPPIRAAAAGGHLNVIEHLVNKGASINKCSVDSLFSAAFYGHLNIVKYLLGYISEVNIIYYAFEKACINGHIDIVQYLFSENIITKDIITENSNTRYLFYHTIRNKHKHIIKFLIENNIFDKDKKYPDILESAPKDMDPYDYLISFLNYQ.

ANK repeat units lie at residues 34–63, 86–115, 116–145, 147–175, 176–205, 206–235, 237–265, 267–294, and 301–331; these read SCKQ…NLKF, EQNE…DFRM, NDDE…NIRA, NNRP…SFVS, KQNE…DINV, GKIP…SINK, SVDS…EVNI, YYAF…ITKD, and NTRY…DKDK.

The protein is Putative ankyrin repeat protein L42 of Acanthamoeba polyphaga (Amoeba).